The primary structure comprises 301 residues: Phosducin-like protein (301 aa).

T2 is subject to N-acetylthreonine. The tract at residues 17–60 (YSTSEDEDSDHEDKDRGRGAPAISSTPAEAELAGEGISINTGPK) is disordered. Phosphoserine is present on residues S20, S25, S226, S293, and S296. A Phosducin domain is found at 36 to 299 (APAISSTPAE…TCHSEDSDLE (264 aa)). A thioredoxin fold region spans residues 158 to 301 (FKQVFEIPSG…HSEDSDLEID (144 aa)).

It belongs to the phosducin family. As to quaternary structure, forms a complex with the beta and gamma subunits of the GTP-binding protein, transducin. Interacts with the CCT chaperonin complex.

Its subcellular location is the cell projection. The protein resides in the cilium. Functions as a co-chaperone for CCT in the assembly of heterotrimeric G protein complexes, facilitates the assembly of both Gbeta-Ggamma and RGS-Gbeta5 heterodimers. Also acts as a positive regulator of hedgehog signaling and regulates ciliary function. This Mus musculus (Mouse) protein is Phosducin-like protein (Pdcl).